A 140-amino-acid polypeptide reads, in one-letter code: Nucleoside diphosphate kinase (140 aa).

ATP contacts are provided by K11, F59, R87, T93, R104, and N114. The active-site Pros-phosphohistidine intermediate is the H117.

The protein belongs to the NDK family. Homotetramer. Mg(2+) is required as a cofactor.

Its subcellular location is the cytoplasm. It carries out the reaction a 2'-deoxyribonucleoside 5'-diphosphate + ATP = a 2'-deoxyribonucleoside 5'-triphosphate + ADP. The catalysed reaction is a ribonucleoside 5'-diphosphate + ATP = a ribonucleoside 5'-triphosphate + ADP. Functionally, major role in the synthesis of nucleoside triphosphates other than ATP. The ATP gamma phosphate is transferred to the NDP beta phosphate via a ping-pong mechanism, using a phosphorylated active-site intermediate. The polypeptide is Nucleoside diphosphate kinase (Rickettsia akari (strain Hartford)).